Consider the following 213-residue polypeptide: Cytidylate kinase (213 aa).

ATP is bound at residue 9-17; it reads GPAASGKGT.

Belongs to the cytidylate kinase family. Type 1 subfamily.

The protein localises to the cytoplasm. The catalysed reaction is CMP + ATP = CDP + ADP. The enzyme catalyses dCMP + ATP = dCDP + ADP. The protein is Cytidylate kinase of Caulobacter vibrioides (strain ATCC 19089 / CIP 103742 / CB 15) (Caulobacter crescentus).